The following is a 455-amino-acid chain: MNFDTIIIGGGMAGLSCALRCLEAGLKTAVIASGQSALHFSSGSIDVLAKTPSGEPVSNPMTCIDTFAKEYPNHPYATLGKETVERAIDWYRNTLSTIGVPLTSQNNGLNHYRLTPLGAMKSTWLSQPFVHQFPMDLEKNKTQKMVLITIDGFRDFQPKLAQDNLKQITQLSDLEITTANISLSAFNDIQRNHCELRSIDLSRLLSKRANRQELAYALQQHAQPGDLVVIPSIFGNGTGLTYLKEIEQLTKLTLCEVPTMPPSLLGIRLEESMKHAFIELGGTMLNGDHVVQGEFSYVDKSDPEHSHYRLNRIFTKNHGDFPLQAKQFVLATGSFFSQGLKANVDSMIEPIFGLDIAQSDKRTDWYSHDFFSTQSHPFLSMGIKTTANFQAIKSGHVIDNLYCAGAILSGYNPILEGSGSGVAISSGFHAAESIIEQLQPNDFFQNNNIKAEVAL.

The protein belongs to the anaerobic G-3-P dehydrogenase subunit B family. In terms of assembly, composed of a catalytic GlpA/B dimer and of membrane bound GlpC. Requires FMN as cofactor.

The enzyme catalyses a quinone + sn-glycerol 3-phosphate = dihydroxyacetone phosphate + a quinol. It participates in polyol metabolism; glycerol degradation via glycerol kinase pathway; glycerone phosphate from sn-glycerol 3-phosphate (anaerobic route): step 1/1. Conversion of glycerol 3-phosphate to dihydroxyacetone. Uses fumarate or nitrate as electron acceptor. The sequence is that of Anaerobic glycerol-3-phosphate dehydrogenase subunit B from Aliivibrio fischeri (strain MJ11) (Vibrio fischeri).